The primary structure comprises 156 residues: Ribosomal RNA large subunit methyltransferase H (156 aa).

Residues Leu73, Gly104, and 123–128 (LSPLTL) each bind S-adenosyl-L-methionine.

It belongs to the RNA methyltransferase RlmH family. In terms of assembly, homodimer.

It localises to the cytoplasm. It catalyses the reaction pseudouridine(1915) in 23S rRNA + S-adenosyl-L-methionine = N(3)-methylpseudouridine(1915) in 23S rRNA + S-adenosyl-L-homocysteine + H(+). Specifically methylates the pseudouridine at position 1915 (m3Psi1915) in 23S rRNA. The sequence is that of Ribosomal RNA large subunit methyltransferase H from Pseudoalteromonas atlantica (strain T6c / ATCC BAA-1087).